Here is a 225-residue protein sequence, read N- to C-terminus: Transmembrane protein 225 (225 aa).

Residues 1-8 (MVHVSNRS) are Cytoplasmic-facing. Residues 9–29 (IQGMNILFSSWAVVLMVMGIT) form a helical membrane-spanning segment. Over 30–72 (LDKWVELISEDERAKMNHSPWMMCCPALWPEDDLKVVRIMMTS) the chain is Extracellular. Residues 73-93 (SLGLSFLLNLILGMKFTYLIP) traverse the membrane as a helical segment. Residues 94–99 (QNKYIQ) lie on the Cytoplasmic side of the membrane. Residues 100 to 120 (LFTTILSFFSGISLLWALILY) traverse the membrane as a helical segment. The Extracellular segment spans residues 121 to 136 (HNKLKQGQSMHFSSYR). Residues 137-157 (ITWIMYTAYLNVFFLSVCGVL) traverse the membrane as a helical segment. At 158–225 (SLLECKLSTS…VQTRHVTWAL (68 aa)) the chain is on the cytoplasmic side. The RVxF motif lies at 219 to 223 (RHVTW).

In terms of assembly, interacts (via RVxF motif) with PPP1CC.

Its subcellular location is the cytoplasmic vesicle. It is found in the secretory vesicle. The protein localises to the acrosome membrane. Its function is as follows. Probably inhibits protein phosphatase 1 (PP1) in sperm via binding to catalytic subunit PPP1CC. The sequence is that of Transmembrane protein 225 (TMEM225) from Homo sapiens (Human).